The chain runs to 1452 residues: ABC-type transporter adrC (1452 aa).

Positions 1–38 (MAPEEGDQAMSHEDKAACSSLNTTSSTELFDGAPSSEN) are disordered. A compositionally biased stretch (polar residues) spans 19 to 28 (SSLNTTSSTE). Residues 116 to 378 (KRLMSIVGNK…FETMGWKRPP (263 aa)) enclose the ABC transporter 1 domain. A run of 6 helical transmembrane segments spans residues 487 to 507 (IPAL…IGSL), 524 to 544 (VLFL…TTLY), 569 to 589 (VIVD…IVYF), 598 to 618 (SHFF…ATIF), 631 to 651 (AMAL…FTVP), and 738 to 758 (GILV…TELI). The ABC transporter 2 domain occupies 813 to 1055 (FSWKGLSYDI…TVLEYLEDKG (243 aa)). Position 849-856 (849-856 (GVSGAGKT)) interacts with ATP. The next 7 helical transmembrane spans lie at 1149–1169 (YILA…FSFW), 1181–1201 (VLFS…QIMP), 1224–1244 (VFIL…GICT), 1264–1284 (LVLL…QLVV), 1287–1307 (VPSV…CLLF), 1322–1344 (IFMN…ALHG), and 1415–1435 (FGIF…LYYL).

This sequence belongs to the ABC transporter superfamily. ABCG family. PDR (TC 3.A.1.205) subfamily.

It is found in the membrane. ABC-type transporter; part of the gene cluster that mediates the biosynthesis of the meroterpenoid compound andrastin A, a promising antitumoral compound. Is required for the production of andrastin A but does not have a significant role in its secretion. The sequence is that of ABC-type transporter adrC from Penicillium roqueforti.